The primary structure comprises 315 residues: Ribosomal RNA small subunit methyltransferase H (315 aa).

S-adenosyl-L-methionine contacts are provided by residues 32-34 (GGH), Asp-52, Phe-78, Asp-100, and Gln-107.

It belongs to the methyltransferase superfamily. RsmH family.

The protein resides in the cytoplasm. The enzyme catalyses cytidine(1402) in 16S rRNA + S-adenosyl-L-methionine = N(4)-methylcytidine(1402) in 16S rRNA + S-adenosyl-L-homocysteine + H(+). Specifically methylates the N4 position of cytidine in position 1402 (C1402) of 16S rRNA. The protein is Ribosomal RNA small subunit methyltransferase H of Psychromonas ingrahamii (strain DSM 17664 / CCUG 51855 / 37).